A 505-amino-acid polypeptide reads, in one-letter code: Phosphomevalonate kinase, peroxisomal (505 aa).

N-acetylalanine is present on A2. A Peroxisomal targeting signal PTS2 motif is present at residues 57 to 65 (DVKLTSPQL). 177 to 187 (VAKTGLGSSAA) is an ATP binding site.

This sequence belongs to the GHMP kinase family. Mevalonate kinase subfamily.

The protein resides in the peroxisome. The enzyme catalyses (R)-5-phosphomevalonate + ATP = (R)-5-diphosphomevalonate + ADP. The protein operates within isoprenoid biosynthesis; isopentenyl diphosphate biosynthesis via mevalonate pathway; isopentenyl diphosphate from (R)-mevalonate: step 2/3. The polypeptide is Phosphomevalonate kinase, peroxisomal (Arabidopsis thaliana (Mouse-ear cress)).